The primary structure comprises 305 residues: Plant-type L-asparaginase (305 aa).

T175 acts as the Nucleophile in catalysis. Substrate-binding positions include R202–D205 and T224–G227.

It belongs to the Ntn-hydrolase family. In terms of assembly, heterotetramer of two alpha and two beta chains arranged as a dimer of alpha/beta heterodimers. The uncleaved protein forms homodimers. Autocleaved. Generates the alpha and beta subunits. The N-terminal residue of the beta subunit is thought to be responsible for the nucleophile hydrolase activity.

It catalyses the reaction L-asparagine + H2O = L-aspartate + NH4(+). Its function is as follows. Catalyzes the hydrolysis of L-asparagine into L-aspartate and ammonia. Does not exhibit glutaminase activity. In Pyrococcus abyssi (strain GE5 / Orsay), this protein is Plant-type L-asparaginase.